The following is a 79-amino-acid chain: Protein SIP18 (79 aa).

The tract at residues 1 to 79 (MSNMMNKFAE…DWKTYENMKK (79 aa)) is disordered. Positions 8–20 (FAEKLQGNDDSHQ) are enriched in basic and acidic residues.

In Saccharomyces cerevisiae (strain ATCC 204508 / S288c) (Baker's yeast), this protein is Protein SIP18 (SIP18).